The primary structure comprises 144 residues: Maximins 5/H4 type 3 (144 aa).

An N-terminal signal peptide occupies residues 1 to 18 (MNFKYIVAVSFLIASAYA). Propeptides lie at residues 19–43 (RSVQ…REIR) and 74–123 (TAED…KEKR). At Leu143 the chain carries Leucine amide.

This sequence belongs to the bombinin family. As to expression, expressed by the skin glands.

It is found in the secreted. Maximin-5 shows antibacterial activity against both Gram-positive and Gram-negative bacteria. The only exception is the resistance of E.coli. Also shows antimicrobial activity against fungi C.albicans, A.flavus and P.uticale. It has little hemolytic activity. It does not possess a significant cytotoxicity against tumor cell lines. It does not possess a significant anti-HIV activity. In terms of biological role, maximin-H4 shows antibacterial activity against both Gram-positive and Gram-negative bacteria. It also shows antimicrobial activity against the fungus C.albicans. Shows strong hemolytic activity. The chain is Maximins 5/H4 type 3 from Bombina maxima (Giant fire-bellied toad).